The primary structure comprises 235 residues: Eukaryotic translation initiation factor 4E-1 (235 aa).

Over residues 16–25 (VNKHRGVRSD) the composition is skewed to basic and acidic residues. The disordered stretch occupies residues 16 to 56 (VNKHRGVRSDGEEDEQLEEGEIVGGDADTLSSSSSSRPGTA). A compositionally biased stretch (acidic residues) spans 26-36 (GEEDEQLEEGE). 2 EIF4G-binding regions span residues 60-63 (HPLE) and 70-106 (FDTPSAKSKQVAWGSSMRPIYTFSSVEEFWSLYNNIH). MRNA is bound by residues 78–83 (KQVAWG), lysine 110, and 128–129 (WE). An intrachain disulfide couples cysteine 133 to cysteine 171. An EIF4G-binding region spans residues 154–163 (YTLLAMIGEQ). Residues 178 to 183 (RARQEK) and 223 to 227 (KTLDR) contribute to the mRNA site.

It belongs to the eukaryotic initiation factor 4E family. As to quaternary structure, EIF4F is a multi-subunit complex, the composition of which varies with external and internal environmental conditions. It is composed of at least EIF4A, EIF4E and EIF4G. EIF4E is also known to interact with other partners. In higher plants two isoforms of EIF4F have been identified, named isoform EIF4F and isoform EIF(iso)4F. Isoform EIF4F has subunits p220 and p26, whereas isoform EIF(iso)4F has subunits p82 and p28. In terms of assembly, (Microbial infection) Interacts with potyvirus viral genome-linked protein (VPg); this interaction is possible in susceptible hosts but impaired in resistant plants. According to the redox status, the Cys-133-Cys-171 disulfide bridge may have a role in regulating protein function by affecting its ability to bind capped mRNA.

It localises to the nucleus. Its subcellular location is the cytoplasm. Its function is as follows. Component of the protein complex eIF4F, which is involved in the recognition of the mRNA cap, ATP-dependent unwinding of 5'-terminal secondary structure and recruitment of mRNA to the ribosome. Recognizes and binds the 7-methylguanosine-containing mRNA cap during an early step in the initiation of protein synthesis and facilitates ribosome binding by inducing the unwinding of the mRNAs secondary structures. Key component of recessive resistance to potyviruses. In terms of biological role, (Microbial infection) Susceptibility host factor required for viral infection by recruiting viral RNAs to the host ribosomal complex via an interaction with viral genome-linked protein (VPg). The polypeptide is Eukaryotic translation initiation factor 4E-1 (Lactuca sativa (Garden lettuce)).